Reading from the N-terminus, the 102-residue chain is Protein E7 (102 aa).

An E7 terminal domain region spans residues 1-44 (MIGKEVTVQDIVLELSEVQPEVLPVDLFCEEELPNEDTEEELDT). The short motif at 27-31 (LFCEE) is the LXCXE motif; interaction with host RB1 and TMEM173/STING element. The segment at 55–93 (CGCSHCEVKLRVFVQATEFGIRAFQQLLTGDLQLLCPEC) is a zinc-finger region. A Nuclear export signal motif is present at residues 75-83 (IRAFQQLLT).

This sequence belongs to the papillomaviridae E7 protein family. In terms of assembly, homodimer. Homooligomer. Interacts with host RB1; this interaction induces dissociation of RB1-E2F1 complex thereby disrupting RB1 activity. Interacts with host EP300; this interaction represses EP300 transcriptional activity. Interacts with protein E2; this interaction inhibits E7 oncogenic activity. Interacts with host TMEM173/STING; this interaction impairs the ability of TMEM173/STING to sense cytosolic DNA and promote the production of type I interferon (IFN-alpha and IFN-beta). In terms of processing, highly phosphorylated.

It is found in the host cytoplasm. The protein localises to the host nucleus. Functionally, plays a role in viral genome replication by driving entry of quiescent cells into the cell cycle. Stimulation of progression from G1 to S phase allows the virus to efficiently use the cellular DNA replicating machinery to achieve viral genome replication. E7 protein has both transforming and trans-activating activities. Induces the disassembly of the E2F1 transcription factor from RB1, with subsequent transcriptional activation of E2F1-regulated S-phase genes. Interferes with host histone deacetylation mediated by HDAC1 and HDAC2, leading to transcription activation. Also plays a role in the inhibition of both antiviral and antiproliferative functions of host interferon alpha. Interaction with host TMEM173/STING impairs the ability of TMEM173/STING to sense cytosolic DNA and promote the production of type I interferon (IFN-alpha and IFN-beta). The sequence is that of Protein E7 from Human papillomavirus 36.